A 433-amino-acid polypeptide reads, in one-letter code: 5-methylthioadenosine/S-adenosylhomocysteine deaminase (433 aa).

Positions 67 and 69 each coordinate Zn(2+). Substrate-binding residues include Glu96, Arg148, and His187. His214 contributes to the Zn(2+) binding site. 2 residues coordinate substrate: Glu217 and Asp302. Residue Asp302 participates in Zn(2+) binding.

Belongs to the metallo-dependent hydrolases superfamily. MTA/SAH deaminase family. It depends on Zn(2+) as a cofactor.

It carries out the reaction S-adenosyl-L-homocysteine + H2O + H(+) = S-inosyl-L-homocysteine + NH4(+). The catalysed reaction is S-methyl-5'-thioadenosine + H2O + H(+) = S-methyl-5'-thioinosine + NH4(+). Catalyzes the deamination of 5-methylthioadenosine and S-adenosyl-L-homocysteine into 5-methylthioinosine and S-inosyl-L-homocysteine, respectively. Is also able to deaminate adenosine. This is 5-methylthioadenosine/S-adenosylhomocysteine deaminase from Carboxydothermus hydrogenoformans (strain ATCC BAA-161 / DSM 6008 / Z-2901).